Here is a 102-residue protein sequence, read N- to C-terminus: uncharacterized protein (102 aa).

Belongs to the helicase family. Yeast subtelomeric Y' repeat subfamily.

This is an uncharacterized protein from Saccharomyces cerevisiae (strain ATCC 204508 / S288c) (Baker's yeast).